A 652-amino-acid chain; its full sequence is tRNA 5-methylaminomethyl-2-thiouridine biosynthesis bifunctional protein MnmC (652 aa).

Residues 1 to 235 are tRNA (mnm(5)s(2)U34)-methyltransferase; sequence MPDRLVPATL…EPALRVGEYA (235 aa). The segment at 259–652 is FAD-dependent cmnm(5)s(2)U34 oxidoreductase; it reads IGAGLAGCAV…IRALRGRQIG (394 aa).

It in the N-terminal section; belongs to the methyltransferase superfamily. tRNA (mnm(5)s(2)U34)-methyltransferase family. The protein in the C-terminal section; belongs to the DAO family. FAD serves as cofactor.

The protein resides in the cytoplasm. The enzyme catalyses 5-aminomethyl-2-thiouridine(34) in tRNA + S-adenosyl-L-methionine = 5-methylaminomethyl-2-thiouridine(34) in tRNA + S-adenosyl-L-homocysteine + H(+). Functionally, catalyzes the last two steps in the biosynthesis of 5-methylaminomethyl-2-thiouridine (mnm(5)s(2)U) at the wobble position (U34) in tRNA. Catalyzes the FAD-dependent demodification of cmnm(5)s(2)U34 to nm(5)s(2)U34, followed by the transfer of a methyl group from S-adenosyl-L-methionine to nm(5)s(2)U34, to form mnm(5)s(2)U34. This chain is tRNA 5-methylaminomethyl-2-thiouridine biosynthesis bifunctional protein MnmC, found in Burkholderia ambifaria (strain ATCC BAA-244 / DSM 16087 / CCUG 44356 / LMG 19182 / AMMD) (Burkholderia cepacia (strain AMMD)).